Here is a 638-residue protein sequence, read N- to C-terminus: Plasma kallikrein (638 aa).

Positions 1 to 19 (MILFKQVGYFVSLFATVSC) are cleaved as a signal peptide. Apple domains are found at residues 21–104 (CLSQ…LKQC), 111–194 (CHQD…LKSC), 201–284 (CPMD…LFTC), and 292–375 (CHFK…LRLC). 18 disulfides stabilise this stretch: Cys21–Cys104, Cys47–Cys77, Cys51–Cys57, Cys111–Cys194, Cys137–Cys166, Cys141–Cys147, Cys201–Cys284, Cys227–Cys256, Cys231–Cys237, Cys292–Cys375, Cys318–Cys347, Cys322–Cys328, Cys340–Cys345, Cys383–Cys503, Cys419–Cys435, Cys517–Cys584, Cys548–Cys563, and Cys574–Cys602. N-linked (GlcNAc...) asparagine glycosylation occurs at Asn127. N-linked (GlcNAc...) asparagine glycosylation occurs at Asn215. N-linked (GlcNAc...) asparagine glycosylation is present at Asn308. The 236-residue stretch at 391-626 (IVGGTNSSLG…YIDWILEKIQ (236 aa)) folds into the Peptidase S1 domain. N-linked (GlcNAc...) asparagine glycosylation occurs at Asn396. Residue His434 is the Charge relay system of the active site. The N-linked (GlcNAc...) asparagine glycan is linked to Asn453. The active-site Charge relay system is Asp483. Asn494 carries an N-linked (GlcNAc...) asparagine glycan. Ser578 acts as the Charge relay system in catalysis.

It belongs to the peptidase S1 family. Plasma kallikrein subfamily. As to quaternary structure, forms a heterodimer with SERPINA5. The zymogen is activated by factor XIIa, which cleaves the molecule into a light chain, which contains the active site, and a heavy chain, which associates with HMW kininogen. These chains are linked by one or more disulfide bonds.

The protein localises to the secreted. The catalysed reaction is Cleaves selectively Arg-|-Xaa and Lys-|-Xaa bonds, including Lys-|-Arg and Arg-|-Ser bonds in (human) kininogen to release bradykinin.. Its activity is regulated as follows. Inhibited by SERPINA5. Functionally, the enzyme cleaves Lys-Arg and Arg-Ser bonds. It activates, in a reciprocal reaction, factor XII after its binding to a negatively charged surface. It also releases bradykinin from HMW kininogen and may also play a role in the renin-angiotensin system by converting prorenin into renin. In Rattus norvegicus (Rat), this protein is Plasma kallikrein (Klkb1).